A 119-amino-acid chain; its full sequence is Ribonuclease P protein component (119 aa).

The protein belongs to the RnpA family. In terms of assembly, consists of a catalytic RNA component (M1 or rnpB) and a protein subunit.

The catalysed reaction is Endonucleolytic cleavage of RNA, removing 5'-extranucleotides from tRNA precursor.. RNaseP catalyzes the removal of the 5'-leader sequence from pre-tRNA to produce the mature 5'-terminus. It can also cleave other RNA substrates such as 4.5S RNA. The protein component plays an auxiliary but essential role in vivo by binding to the 5'-leader sequence and broadening the substrate specificity of the ribozyme. The chain is Ribonuclease P protein component from Mycolicibacterium paratuberculosis (strain ATCC BAA-968 / K-10) (Mycobacterium paratuberculosis).